The sequence spans 295 residues: Glucose-1-phosphate thymidylyltransferase (295 aa).

Positions 111 and 226 each coordinate Mg(2+).

The protein belongs to the glucose-1-phosphate thymidylyltransferase family. As to quaternary structure, homotetramer. The cofactor is Mg(2+).

The enzyme catalyses dTTP + alpha-D-glucose 1-phosphate + H(+) = dTDP-alpha-D-glucose + diphosphate. Its pathway is carbohydrate biosynthesis; dTDP-L-rhamnose biosynthesis. It participates in bacterial outer membrane biogenesis; LPS O-antigen biosynthesis. Its function is as follows. Catalyzes the formation of dTDP-glucose, from dTTP and glucose 1-phosphate, as well as its pyrophosphorolysis. The protein is Glucose-1-phosphate thymidylyltransferase (rmlA) of Xanthomonas campestris pv. campestris (strain B100).